The primary structure comprises 355 residues: UDP-N-acetylglucosamine--N-acetylmuramyl-(pentapeptide) pyrophosphoryl-undecaprenol N-acetylglucosamine transferase (355 aa).

Residues 14-16, Asn-126, Arg-162, Ser-190, Ile-243, 262-267, and Gln-287 contribute to the UDP-N-acetyl-alpha-D-glucosamine site; these read TGG and ALTVSE.

The protein belongs to the glycosyltransferase 28 family. MurG subfamily.

It is found in the cell inner membrane. The catalysed reaction is di-trans,octa-cis-undecaprenyl diphospho-N-acetyl-alpha-D-muramoyl-L-alanyl-D-glutamyl-meso-2,6-diaminopimeloyl-D-alanyl-D-alanine + UDP-N-acetyl-alpha-D-glucosamine = di-trans,octa-cis-undecaprenyl diphospho-[N-acetyl-alpha-D-glucosaminyl-(1-&gt;4)]-N-acetyl-alpha-D-muramoyl-L-alanyl-D-glutamyl-meso-2,6-diaminopimeloyl-D-alanyl-D-alanine + UDP + H(+). The protein operates within cell wall biogenesis; peptidoglycan biosynthesis. Functionally, cell wall formation. Catalyzes the transfer of a GlcNAc subunit on undecaprenyl-pyrophosphoryl-MurNAc-pentapeptide (lipid intermediate I) to form undecaprenyl-pyrophosphoryl-MurNAc-(pentapeptide)GlcNAc (lipid intermediate II). The polypeptide is UDP-N-acetylglucosamine--N-acetylmuramyl-(pentapeptide) pyrophosphoryl-undecaprenol N-acetylglucosamine transferase (Vibrio vulnificus (strain CMCP6)).